The primary structure comprises 257 residues: MSRLSLTRSPVSPLAAQGIPLPAQLTKSNAPVHIDVGGHMYTSSLATLTKYPDSRISRLFNGTEPIVLDSLKQHYFIDRDGEIFRYILSYLRTSKLLLPEDFKEFQLLYEEARYYQLTPMVKELERWKQEREQRRSAQPCECLVVRVTPDLGERIAVSGDKSLIEEIFPETGDVMCNSVNAGWNQDPTHVIRFPLNGYCRLNSVQVLERLFQKGFSMVASCGGGVDSSQFSEYILSREDRRCQTSHTPIRIKQEPLD.

2 positions are modified to phosphoserine: Ser-9 and Ser-12. One can recognise a BTB domain in the interval 30-100; sequence APVHIDVGGH…LRTSKLLLPE (71 aa).

The chain is BTB/POZ domain-containing protein kctd15-like (kctd15l) from Danio rerio (Zebrafish).